Consider the following 391-residue polypeptide: S-adenosylmethionine synthase (391 aa).

ATP is bound at residue His14. Asp16 provides a ligand contact to Mg(2+). Position 42 (Glu42) interacts with K(+). L-methionine is bound by residues Glu55 and Gln98. The interval 98 to 108 (QSVDIAMGVDE) is flexible loop. Residues 172–174 (DGK), 238–239 (RF), Asp247, 253–254 (RK), Ala270, and Lys274 each bind ATP. Asp247 contributes to the L-methionine binding site. Lys278 provides a ligand contact to L-methionine.

It belongs to the AdoMet synthase family. As to quaternary structure, homotetramer; dimer of dimers. Mg(2+) serves as cofactor. It depends on K(+) as a cofactor.

The protein localises to the cytoplasm. It carries out the reaction L-methionine + ATP + H2O = S-adenosyl-L-methionine + phosphate + diphosphate. It participates in amino-acid biosynthesis; S-adenosyl-L-methionine biosynthesis; S-adenosyl-L-methionine from L-methionine: step 1/1. In terms of biological role, catalyzes the formation of S-adenosylmethionine (AdoMet) from methionine and ATP. The overall synthetic reaction is composed of two sequential steps, AdoMet formation and the subsequent tripolyphosphate hydrolysis which occurs prior to release of AdoMet from the enzyme. This chain is S-adenosylmethionine synthase, found in Clostridium botulinum (strain Hall / ATCC 3502 / NCTC 13319 / Type A).